A 323-amino-acid chain; its full sequence is Aspartate carbamoyltransferase catalytic subunit (323 aa).

Carbamoyl phosphate is bound by residues Arg71 and Thr72. Residue Lys99 participates in L-aspartate binding. Residues Arg121, His151, and Gln154 each coordinate carbamoyl phosphate. L-aspartate is bound by residues Arg184 and Arg239. Positions 280 and 281 each coordinate carbamoyl phosphate.

The protein belongs to the aspartate/ornithine carbamoyltransferase superfamily. ATCase family. Heterododecamer (2C3:3R2) of six catalytic PyrB chains organized as two trimers (C3), and six regulatory PyrI chains organized as three dimers (R2).

The enzyme catalyses carbamoyl phosphate + L-aspartate = N-carbamoyl-L-aspartate + phosphate + H(+). It functions in the pathway pyrimidine metabolism; UMP biosynthesis via de novo pathway; (S)-dihydroorotate from bicarbonate: step 2/3. Its function is as follows. Catalyzes the condensation of carbamoyl phosphate and aspartate to form carbamoyl aspartate and inorganic phosphate, the committed step in the de novo pyrimidine nucleotide biosynthesis pathway. In Ralstonia nicotianae (strain ATCC BAA-1114 / GMI1000) (Ralstonia solanacearum), this protein is Aspartate carbamoyltransferase catalytic subunit.